A 167-amino-acid polypeptide reads, in one-letter code: UPF0254 protein MJ1251 (167 aa).

This sequence belongs to the UPF0254 family.

This is UPF0254 protein MJ1251 from Methanocaldococcus jannaschii (strain ATCC 43067 / DSM 2661 / JAL-1 / JCM 10045 / NBRC 100440) (Methanococcus jannaschii).